The primary structure comprises 280 residues: Probable endonuclease 4 (280 aa).

Zn(2+) contacts are provided by His69, His109, Glu145, Asp179, His182, His216, Asp229, His231, and Glu261.

It belongs to the AP endonuclease 2 family. Zn(2+) serves as cofactor.

It catalyses the reaction Endonucleolytic cleavage to 5'-phosphooligonucleotide end-products.. In terms of biological role, endonuclease IV plays a role in DNA repair. It cleaves phosphodiester bonds at apurinic or apyrimidinic (AP) sites, generating a 3'-hydroxyl group and a 5'-terminal sugar phosphate. The protein is Probable endonuclease 4 of Actinobacillus pleuropneumoniae serotype 5b (strain L20).